We begin with the raw amino-acid sequence, 315 residues long: Ribosomal RNA small subunit methyltransferase H (315 aa).

S-adenosyl-L-methionine is bound by residues 34 to 36 (GGH), D53, D100, and H107.

This sequence belongs to the methyltransferase superfamily. RsmH family.

It localises to the cytoplasm. The catalysed reaction is cytidine(1402) in 16S rRNA + S-adenosyl-L-methionine = N(4)-methylcytidine(1402) in 16S rRNA + S-adenosyl-L-homocysteine + H(+). Specifically methylates the N4 position of cytidine in position 1402 (C1402) of 16S rRNA. The chain is Ribosomal RNA small subunit methyltransferase H from Treponema denticola (strain ATCC 35405 / DSM 14222 / CIP 103919 / JCM 8153 / KCTC 15104).